Consider the following 338-residue polypeptide: Ketol-acid reductoisomerase (NADP(+)) (338 aa).

One can recognise a KARI N-terminal Rossmann domain in the interval Met-1 to Thr-181. NADP(+)-binding positions include Tyr-24 to Gln-27, Arg-47, and Ser-52. Residue His-107 is part of the active site. Gly-133 lines the NADP(+) pocket. A KARI C-terminal knotted domain is found at Asn-182–Ile-327. Mg(2+) is bound by residues Asp-190, Glu-194, Glu-226, and Glu-230. Ser-251 provides a ligand contact to substrate.

This sequence belongs to the ketol-acid reductoisomerase family. The cofactor is Mg(2+).

It carries out the reaction (2R)-2,3-dihydroxy-3-methylbutanoate + NADP(+) = (2S)-2-acetolactate + NADPH + H(+). The catalysed reaction is (2R,3R)-2,3-dihydroxy-3-methylpentanoate + NADP(+) = (S)-2-ethyl-2-hydroxy-3-oxobutanoate + NADPH + H(+). It functions in the pathway amino-acid biosynthesis; L-isoleucine biosynthesis; L-isoleucine from 2-oxobutanoate: step 2/4. The protein operates within amino-acid biosynthesis; L-valine biosynthesis; L-valine from pyruvate: step 2/4. Functionally, involved in the biosynthesis of branched-chain amino acids (BCAA). Catalyzes an alkyl-migration followed by a ketol-acid reduction of (S)-2-acetolactate (S2AL) to yield (R)-2,3-dihydroxy-isovalerate. In the isomerase reaction, S2AL is rearranged via a Mg-dependent methyl migration to produce 3-hydroxy-3-methyl-2-ketobutyrate (HMKB). In the reductase reaction, this 2-ketoacid undergoes a metal-dependent reduction by NADPH to yield (R)-2,3-dihydroxy-isovalerate. This is Ketol-acid reductoisomerase (NADP(+)) from Polynucleobacter necessarius subsp. necessarius (strain STIR1).